A 359-amino-acid chain; its full sequence is Golgi-resident adenosine 3',5'-bisphosphate 3'-phosphatase (359 aa).

M1 is modified (N-acetylmethionine). The Cytoplasmic portion of the chain corresponds to 1-12 (MAPMGIRLSPLG). Residues 13 to 33 (VAVFCLLGLGVLYHLYSGFLA) form a helical membrane-spanning segment. At 34-359 (GRFSLFGLGG…LPDLEKTGHK (326 aa)) the chain is on the lumenal side. Positions 86–106 (ESNVLHEKSKGKTREGAEDKM) are disordered. The active-site Proton acceptor is the D110. Residues E133, D174, L176, and D177 each coordinate Mg(2+). T179 acts as the Proton acceptor in catalysis. Positions 242 and 245 each coordinate AMP. N259 carries an N-linked (GlcNAc...) asparagine glycan. G268 and K272 together coordinate AMP. A Mg(2+)-binding site is contributed by D300.

It belongs to the inositol monophosphatase superfamily. Mg(2+) is required as a cofactor. Contains N-linked glycan resistant to endoglycosydase H.

It is found in the golgi apparatus. It localises to the trans-Golgi network membrane. The catalysed reaction is adenosine 3',5'-bisphosphate + H2O = AMP + phosphate. Its pathway is sulfur metabolism. With respect to regulation, strongly inhibited by lithium. Its function is as follows. Exhibits 3'-nucleotidase activity toward adenosine 3',5'-bisphosphate (PAP), namely hydrolyzes adenosine 3',5'-bisphosphate into adenosine 5'-monophosphate (AMP) and a phosphate. May play a role in the formation of skeletal elements derived through endochondral ossification, possibly by clearing adenosine 3',5'-bisphosphate produced by Golgi sulfotransferases during glycosaminoglycan sulfation. Has no activity toward 3'-phosphoadenosine 5'-phosphosulfate (PAPS) or inositol phosphate (IP) substrates including I(1)P, I(1,4)P2, I(1,3,4)P3, I(1,4,5)P3 and I(1,3,4,5)P4. In Homo sapiens (Human), this protein is Golgi-resident adenosine 3',5'-bisphosphate 3'-phosphatase.